Reading from the N-terminus, the 156-residue chain is ATP synthase subunit b (156 aa).

Residues Leu-7 to Pro-27 form a helical membrane-spanning segment.

This sequence belongs to the ATPase B chain family. As to quaternary structure, F-type ATPases have 2 components, F(1) - the catalytic core - and F(0) - the membrane proton channel. F(1) has five subunits: alpha(3), beta(3), gamma(1), delta(1), epsilon(1). F(0) has three main subunits: a(1), b(2) and c(10-14). The alpha and beta chains form an alternating ring which encloses part of the gamma chain. F(1) is attached to F(0) by a central stalk formed by the gamma and epsilon chains, while a peripheral stalk is formed by the delta and b chains.

It is found in the cell inner membrane. Functionally, f(1)F(0) ATP synthase produces ATP from ADP in the presence of a proton or sodium gradient. F-type ATPases consist of two structural domains, F(1) containing the extramembraneous catalytic core and F(0) containing the membrane proton channel, linked together by a central stalk and a peripheral stalk. During catalysis, ATP synthesis in the catalytic domain of F(1) is coupled via a rotary mechanism of the central stalk subunits to proton translocation. Component of the F(0) channel, it forms part of the peripheral stalk, linking F(1) to F(0). The chain is ATP synthase subunit b from Neisseria meningitidis serogroup C (strain 053442).